Reading from the N-terminus, the 362-residue chain is Heat-inducible transcription repressor HrcA (362 aa).

Belongs to the HrcA family.

Functionally, negative regulator of class I heat shock genes (grpE-dnaK-dnaJ and groELS operons). Prevents heat-shock induction of these operons. The sequence is that of Heat-inducible transcription repressor HrcA from Rhodopseudomonas palustris (strain BisB18).